The following is a 504-amino-acid chain: Maturase K (504 aa).

Belongs to the intron maturase 2 family. MatK subfamily.

The protein localises to the plastid. Its subcellular location is the chloroplast. Its function is as follows. Usually encoded in the trnK tRNA gene intron. Probably assists in splicing its own and other chloroplast group II introns. In Quercus lyrata (Overcup oak), this protein is Maturase K.